The chain runs to 784 residues: Cas scaffolding protein family member 4 (784 aa).

In terms of domain architecture, SH3 spans 11–73; the sequence is PKALLARALY…PANRLQILEE (63 aa). Phosphoserine occurs at positions 197, 246, 302, 373, and 387. A disordered region spans residues 343–376; it reads TPNIYDVPRAMPDVPQAGKELGKAGGPSENSVDH. Residues 466 to 536 are a coiled coil; it reads RDSLEANIDA…LLETKERLES (71 aa). Residues 614 to 635 are disordered; that stretch reads KEGESYQRKAPFQKQRASEQPP.

This sequence belongs to the CAS family. In terms of assembly, interacts (via SH3 domain) with PTK2/FAK1 (via C-terminus). Post-translationally, phosphorylated on tyrosines by SRC.

The protein localises to the cytoplasm. It is found in the cytoskeleton. The protein resides in the cell junction. It localises to the focal adhesion. Its function is as follows. Docking protein that plays a role in tyrosine kinase-based signaling related to cell adhesion and cell spreading. Regulates PTK2/FAK1 activity, focal adhesion integrity, and cell spreading. The protein is Cas scaffolding protein family member 4 of Sus scrofa (Pig).